Here is a 116-residue protein sequence, read N- to C-terminus: Somatostatin (116 aa).

The N-terminal stretch at 1 to 24 (MLSCRLQCALALLSIALAVGTVSA) is a signal peptide. The propeptide occupies 25 to 88 (APSDPRLRQF…QDEVRLELER (64 aa)). The segment at 60–82 (PSQTENEALESEDLSRGAEQDEV) is disordered. The span at 72–82 (DLSRGAEQDEV) shows a compositional bias: basic and acidic residues. A disulfide bridge connects residues C105 and C116.

Belongs to the somatostatin family.

The protein localises to the secreted. Somatostatin inhibits the release of somatotropin. This chain is Somatostatin (SST), found in Gallus gallus (Chicken).